The sequence spans 598 residues: Urease subunit alpha (598 aa).

The Urease domain occupies 136-598; it reads GGLDTHVHWL…APLAQRYFLF (463 aa). Ni(2+) contacts are provided by histidine 141, histidine 143, and lysine 223. Lysine 223 carries the N6-carboxylysine modification. Residue histidine 225 participates in substrate binding. Positions 252 and 278 each coordinate Ni(2+). Histidine 326 acts as the Proton donor in catalysis. Aspartate 366 serves as a coordination point for Ni(2+).

This sequence belongs to the metallo-dependent hydrolases superfamily. Urease alpha subunit family. In terms of assembly, heterotrimer of UreA (gamma), UreB (beta) and UreC (alpha) subunits. Three heterotrimers associate to form the active enzyme. Ni cation serves as cofactor. In terms of processing, carboxylation allows a single lysine to coordinate two nickel ions.

The protein localises to the cytoplasm. The catalysed reaction is urea + 2 H2O + H(+) = hydrogencarbonate + 2 NH4(+). The protein operates within nitrogen metabolism; urea degradation; CO(2) and NH(3) from urea (urease route): step 1/1. The protein is Urease subunit alpha of Ureaplasma urealyticum serovar 10 (strain ATCC 33699 / Western).